The following is a 253-amino-acid chain: MQLSSSEPCVVILTEKEVEVSVNNHATFTLPKNYLAAFACNNNVIELSTLNHVLITHINRNIINDYLLFLNKNLTCVKPWSRLATPVIACHSRTPEVFRLAANHSKQQPSRPCEAELTRALLFTVLSNFLEQSRFIALLMYILRSSVRDSVCRIIQSDIQHYWNLRIVASSLCLSPSLLKKKLKNENTSYSQIVTECRMRYAVQMLLMDNKNITQVAQLCGYSSTSYFISVFKAFYGLTPLNYLAKQRQKVMW.

Residues 149-246 form the HTH araC/xylS-type domain; that stretch reads DSVCRIIQSD…GLTPLNYLAK (98 aa). 2 consecutive DNA-binding regions (H-T-H motif) follow at residues 166-187 and 213-236; these read RIVASSLCLSPSLLKKKLKNEN and ITQVAQLCGYSSTSYFISVFKAFY.

Influences the temperature-dependent expression of several E.coli envelope proteins, most notably the porins OmpF and OmpC and the lambda receptor, LamB. The chain is Porin thermoregulatory protein EnvY (envY) from Escherichia coli (strain K12).